The sequence spans 363 residues: NADH-quinone oxidoreductase subunit H (363 aa).

9 helical membrane passes run 62–82 (GPMY…KLLF), 96–116 (FVIA…VVPF), 127–147 (VGLL…ILAG), 163–183 (AAQV…VMIA), 202–222 (FFDW…VSGV), 238–257 (EIVA…LFFL), 264–286 (ILVS…QGWV), 299–319 (KGGW…YIWF), and 339–359 (FIPL…YGVI).

The protein belongs to the complex I subunit 1 family. NDH-1 is composed of 14 different subunits. Subunits NuoA, H, J, K, L, M, N constitute the membrane sector of the complex.

Its subcellular location is the cell inner membrane. It catalyses the reaction a quinone + NADH + 5 H(+)(in) = a quinol + NAD(+) + 4 H(+)(out). In terms of biological role, NDH-1 shuttles electrons from NADH, via FMN and iron-sulfur (Fe-S) centers, to quinones in the respiratory chain. The immediate electron acceptor for the enzyme in this species is believed to be ubiquinone. Couples the redox reaction to proton translocation (for every two electrons transferred, four hydrogen ions are translocated across the cytoplasmic membrane), and thus conserves the redox energy in a proton gradient. This subunit may bind ubiquinone. The polypeptide is NADH-quinone oxidoreductase subunit H (Xanthomonas axonopodis pv. citri (strain 306)).